Reading from the N-terminus, the 784-residue chain is Protein-tyrosine-phosphatase MKP1 (784 aa).

2 disordered regions span residues 1-73 (MVGR…NSKA) and 94-118 (PKAG…TGER). A compositionally biased stretch (low complexity) spans 22-34 (WRSASWSASRTAS). A phosphothreonine mark is found at threonine 64 and threonine 109. Positions 149–291 (ECSKVADHIY…LLQCQKRVHA (143 aa)) constitute a Tyrosine-protein phosphatase domain. Catalysis depends on cysteine 235, which acts as the Phosphocysteine intermediate. Residue 235–241 (CCQGVSR) participates in substrate binding. Residues 488 to 586 (HSSGSPSSTT…ASPSLAERRG (99 aa)) are disordered. Composition is skewed to low complexity over residues 489 to 510 (SSGS…FLSP) and 521 to 553 (SLKS…LSLL). Polar residues predominate over residues 554-577 (PSQTSPKESRGVNTFLQPSPNRKA). Residues serine 558 and serine 572 each carry the phosphoserine modification.

As to quaternary structure, interacts with MPK6. May interact with MPK3 and MPK4. Post-translationally, phosphorylated on threonine and serine residues by MPK6.

It is found in the cytoplasm. Its subcellular location is the cytosol. It carries out the reaction O-phospho-L-tyrosyl-[protein] + H2O = L-tyrosyl-[protein] + phosphate. Its function is as follows. Protein-tyrosine-phosphatase that acts as a negative regulator of MPK6 and MPK3 signaling by dephosphorylating and repressing MPK6 and MPK3. Modulates defense response by repressing salicylic acid (SA) production, camalexin biosynthesis and SNC1-mediated responses. Acts as a negative regulator of MPK6-mediated pathogen-associated molecular pattern (PAMP) responses, including MPK6 and MPK3 activation, accumulation of extracellular reactive oxygen species and inhibition of seedling growth. Involved in UV-B stress tolerance. May be involved in salt and genotoxic stress responses. This is Protein-tyrosine-phosphatase MKP1 (MKP1) from Arabidopsis thaliana (Mouse-ear cress).